The sequence spans 680 residues: Zinc finger protein 263 (680 aa).

A Glycyl lysine isopeptide (Lys-Gly) (interchain with G-Cter in SUMO2) cross-link involves residue K19. An SCAN box domain is found at 43–125; sequence HLRFRRFRFQ…TLVERMQKEL (83 aa). The interval 147 to 191 is disordered; it reads LPLETAGESPSFKLEPMETERSPGPRLQELLDPSPQRDSQAVKER. Residue K159 forms a Glycyl lysine isopeptide (Lys-Gly) (interchain with G-Cter in SUMO2) linkage. Phosphoserine occurs at positions 168 and 180. Residues K286, K300, and K376 each participate in a glycyl lysine isopeptide (Lys-Gly) (interchain with G-Cter in SUMO2) cross-link. 5 C2H2-type zinc fingers span residues 378 to 400, 434 to 456, 462 to 484, 490 to 512, and 518 to 540; these read HLCA…QRIH, HKCL…QRTH, FQCN…QRTH, YKCP…QRIH, and YRCS…ERTH. Glycyl lysine isopeptide (Lys-Gly) (interchain with G-Cter in SUMO2) cross-links involve residues K570 and K579. 4 consecutive C2H2-type zinc fingers follow at residues 572–594, 600–622, 628–650, and 656–678; these read FECS…QRTH, YKCI…QRIH, YTCH…LRTH, and YKCS…QRTH.

It belongs to the krueppel C2H2-type zinc-finger protein family. As to quaternary structure, interacts with a number of proteins involved in chromatin modification and transcriptional corepression including DNMT1, DNMT3A, HDAC2, PHF8, TRIM28/KAP1, SETDB1, EZH2, UHRF1, CBX3/HP1-gamma, and CBX5/HP1-alpha; recruits these proteins to the SIX3 promoter region, leading to SIX3 transcriptional repression. Interacts with MAPK3/ERK1 and MAPK1/ERK2. Ubiquitinated, leading to proteasomal degradation. In terms of tissue distribution, expressed in Purkinje cells in the brain (at protein level).

The protein localises to the nucleus. Transcription factor that binds to the consensus sequence 5'-TCCTCCC-3' and acts as a transcriptional repressor. Binds to the promoter region of SIX3 and recruits other proteins involved in chromatin modification and transcriptional corepression, resulting in methylation of the promoter and transcriptional repression. Acts as a transcriptional repressor of HS3ST1 and HS3ST3A1 via binding to gene promoter regions. In Mus musculus (Mouse), this protein is Zinc finger protein 263.